We begin with the raw amino-acid sequence, 387 residues long: Xylose isomerase (387 aa).

Catalysis depends on residues H54 and D57. Positions 181, 217, 220, 245, 255, 257, and 287 each coordinate Mg(2+).

Belongs to the xylose isomerase family. In terms of assembly, homotetramer. Mg(2+) serves as cofactor.

It localises to the cytoplasm. It carries out the reaction alpha-D-xylose = alpha-D-xylulofuranose. In Streptomyces coelicolor (strain ATCC BAA-471 / A3(2) / M145), this protein is Xylose isomerase.